A 186-amino-acid chain; its full sequence is MQRIWISGYRGYELGTFGDKDPKITVIKYAIKQCLTNLLEEGQLDWVITGANLGVEQWSAEVALELRQDYNLRLAVMLPYLDFGSRWSENNQLKLQNLKNQADFWSATSKGPYQGGRQFREYQQFMFQHTDRALLVYDPEYPGKSKYDYEMIEKYLEKRDDYQLDLVDYYDLEQAARDYEGNQREW.

The protein belongs to the UPF0398 family.

This Lactobacillus delbrueckii subsp. bulgaricus (strain ATCC BAA-365 / Lb-18) protein is UPF0398 protein LBUL_0921.